The primary structure comprises 359 residues: Molybdenum import ATP-binding protein ModC (359 aa).

The region spanning 1-233 (MSGLTVSIRG…IDAESEGGGV (233 aa)) is the ABC transporter domain. 32–39 (GHSGAGKT) is an ATP binding site. A Mop domain is found at 289–355 (AISIRNLLPV…VKAVSVDRAA (67 aa)).

The protein belongs to the ABC transporter superfamily. Molybdate importer (TC 3.A.1.8) family. The complex is composed of two ATP-binding proteins (ModC), two transmembrane proteins (ModB) and a solute-binding protein (ModA).

The protein localises to the cell inner membrane. The enzyme catalyses molybdate(out) + ATP + H2O = molybdate(in) + ADP + phosphate + H(+). Its function is as follows. Part of the ABC transporter complex ModABC involved in molybdenum import. Responsible for energy coupling to the transport system. This Brucella abortus (strain 2308) protein is Molybdenum import ATP-binding protein ModC.